We begin with the raw amino-acid sequence, 375 residues long: DNA replication and repair protein RecF (375 aa).

30–37 (GENAQGKT) contributes to the ATP binding site.

Belongs to the RecF family.

The protein resides in the cytoplasm. In terms of biological role, the RecF protein is involved in DNA metabolism; it is required for DNA replication and normal SOS inducibility. RecF binds preferentially to single-stranded, linear DNA. It also seems to bind ATP. The protein is DNA replication and repair protein RecF of Bacillus mycoides (strain KBAB4) (Bacillus weihenstephanensis).